The sequence spans 266 residues: Orotidine 5'-phosphate decarboxylase (266 aa).

Substrate-binding positions include aspartate 37, lysine 59–histidine 61, aspartate 91–threonine 100, tyrosine 217, and arginine 235. Catalysis depends on lysine 93, which acts as the Proton donor.

This sequence belongs to the OMP decarboxylase family.

It carries out the reaction orotidine 5'-phosphate + H(+) = UMP + CO2. It functions in the pathway pyrimidine metabolism; UMP biosynthesis via de novo pathway; UMP from orotate: step 2/2. The sequence is that of Orotidine 5'-phosphate decarboxylase (URA3) from Cyberlindnera jadinii (Torula yeast).